A 303-amino-acid chain; its full sequence is Recombination-associated protein RdgC (303 aa).

This sequence belongs to the RdgC family.

It localises to the cytoplasm. The protein localises to the nucleoid. Functionally, may be involved in recombination. This chain is Recombination-associated protein RdgC, found in Aeromonas hydrophila subsp. hydrophila (strain ATCC 7966 / DSM 30187 / BCRC 13018 / CCUG 14551 / JCM 1027 / KCTC 2358 / NCIMB 9240 / NCTC 8049).